The sequence spans 410 residues: Peptide chain release factor subunit 1 (410 aa).

The protein belongs to the eukaryotic release factor 1 family. Heterodimer of two subunits, one of which binds GTP.

The protein localises to the cytoplasm. Its function is as follows. Directs the termination of nascent peptide synthesis (translation) in response to the termination codons UAA, UAG and UGA. This chain is Peptide chain release factor subunit 1, found in Picrophilus torridus (strain ATCC 700027 / DSM 9790 / JCM 10055 / NBRC 100828 / KAW 2/3).